Here is a 192-residue protein sequence, read N- to C-terminus: Cytidylate kinase (192 aa).

An ATP-binding site is contributed by 7–15 (GPAGSGKST).

This sequence belongs to the cytidylate kinase family. Type 2 subfamily.

It localises to the cytoplasm. The enzyme catalyses CMP + ATP = CDP + ADP. It catalyses the reaction dCMP + ATP = dCDP + ADP. This is Cytidylate kinase from Natronomonas pharaonis (strain ATCC 35678 / DSM 2160 / CIP 103997 / JCM 8858 / NBRC 14720 / NCIMB 2260 / Gabara) (Halobacterium pharaonis).